Reading from the N-terminus, the 149-residue chain is Protein SprT-like (149 aa).

Residues 4–143 (TDYVKQVSLE…CGLCRGKLLL (140 aa)) enclose the SprT-like domain. Residue H64 participates in Zn(2+) binding. Residue E65 is part of the active site. Position 68 (H68) interacts with Zn(2+).

This sequence belongs to the SprT family. It depends on Zn(2+) as a cofactor.

Its subcellular location is the cytoplasm. This is Protein SprT-like from Streptococcus pneumoniae (strain Taiwan19F-14).